The following is a 385-amino-acid chain: Enoyl-[acyl-carrier-protein] reductase, mitochondrial (385 aa).

Y78 functions as the Proton donor in the catalytic mechanism. NADP(+) contacts are provided by residues N162, 190-193 (TSGV), 213-215 (RDR), 288-291 (YGGM), 313-315 (YWV), and K378.

It belongs to the zinc-containing alcohol dehydrogenase family. Quinone oxidoreductase subfamily. As to quaternary structure, homodimer.

The protein localises to the mitochondrion matrix. It catalyses the reaction a 2,3-saturated acyl-[ACP] + NADP(+) = a (2E)-enoyl-[ACP] + NADPH + H(+). Functionally, catalyzes the NADPH-dependent reduction of trans-2-enoyl thioesters in mitochondrial fatty acid synthesis (fatty acid synthesis type II). Fatty acid chain elongation in mitochondria uses acyl carrier protein (ACP) as an acyl group carrier, but the enzyme accepts both ACP and CoA thioesters as substrates in vitro. Required for respiration and the maintenance of the mitochondrial compartment. The protein is Enoyl-[acyl-carrier-protein] reductase, mitochondrial (ETR1) of Candida glabrata (strain ATCC 2001 / BCRC 20586 / JCM 3761 / NBRC 0622 / NRRL Y-65 / CBS 138) (Yeast).